Here is a 425-residue protein sequence, read N- to C-terminus: GPI mannosyltransferase 1 (425 aa).

Helical transmembrane passes span 11 to 31, 85 to 105, 144 to 164, 166 to 186, 233 to 253, 295 to 315, 340 to 360, 367 to 387, and 398 to 418; these read VIGA…WQDA, FFAF…WLIA, LLGV…VSLA, VILG…PAVV, IHLT…MYIL, FESL…PLVL, SQYF…SSLM, ILVG…GYNL, and GLFL…GIIV.

This sequence belongs to the PIGM family.

The protein resides in the endoplasmic reticulum membrane. It participates in glycolipid biosynthesis; glycosylphosphatidylinositol-anchor biosynthesis. Its function is as follows. Mannosyltransferase involved in glycosylphosphatidylinositol-anchor biosynthesis. Transfers the first alpha-1,4-mannose to GlcN-acyl-PI during GPI precursor assembly. Required for cell wall integrity. The protein is GPI mannosyltransferase 1 (gpi14) of Aspergillus fumigatus (strain ATCC MYA-4609 / CBS 101355 / FGSC A1100 / Af293) (Neosartorya fumigata).